The sequence spans 414 residues: Sec-independent protein translocase protein TatC (414 aa).

The tract at residues 1 to 21 (MTQSTSVSKGGRVSRKAKKNP) is disordered. 6 helical membrane-spanning segments follow: residues 45-65 (IAVT…AWAI), 119-139 (GGLA…WRFI), 157-177 (IAGF…PMGL), 200-220 (FVIA…FTAM), 238-258 (IMIV…DPIS), and 259-279 (MLVL…FTRI). The tract at residues 315 to 414 (IYDGDHKGIA…IQSSSFDDVL (100 aa)) is disordered. The segment covering 323-336 (IAGGGDAHPAGGSG) has biased composition (gly residues). The span at 345–357 (TAPTRAPSASESP) shows a compositional bias: low complexity. Residues 403-414 (DTIQSSSFDDVL) are compositionally biased toward polar residues.

The protein belongs to the TatC family. The Tat system comprises two distinct complexes: a TatABC complex, containing multiple copies of TatA, TatB and TatC subunits, and a separate TatA complex, containing only TatA subunits. Substrates initially bind to the TatABC complex, which probably triggers association of the separate TatA complex to form the active translocon.

It is found in the cell membrane. Functionally, part of the twin-arginine translocation (Tat) system that transports large folded proteins containing a characteristic twin-arginine motif in their signal peptide across membranes. Together with TatB, TatC is part of a receptor directly interacting with Tat signal peptides. In Corynebacterium kroppenstedtii (strain DSM 44385 / JCM 11950 / CIP 105744 / CCUG 35717), this protein is Sec-independent protein translocase protein TatC.